Here is a 249-residue protein sequence, read N- to C-terminus: tRNA(Phe) (4-demethylwyosine(37)-C(7)) aminocarboxypropyltransferase (249 aa).

S-adenosyl-L-methionine-binding positions include Ser-80, Arg-87, Glu-127, and 154-155; that span reads DN.

Belongs to the class I-like SAM-binding methyltransferase superfamily. TRM5/TYW2 family.

It is found in the cytoplasm. It catalyses the reaction 4-demethylwyosine(37) in tRNA(Phe) + S-adenosyl-L-methionine = 4-demethyl-7-[(3S)-3-amino-3-carboxypropyl]wyosine(37) in tRNA(Phe) + S-methyl-5'-thioadenosine + H(+). S-adenosyl-L-methionine-dependent transferase that acts as a component of the wyosine derivatives biosynthesis pathway. Catalyzes the transfer of the alpha-amino-alpha-carboxypropyl (acp) group from S-adenosyl-L-methionine to 4-demethylwyosine (imG-14), forming 7-aminocarboxypropyl-demethylwyosine (wybutosine-86) at position 37 of tRNA(Phe). The polypeptide is tRNA(Phe) (4-demethylwyosine(37)-C(7)) aminocarboxypropyltransferase (Methanocaldococcus jannaschii (strain ATCC 43067 / DSM 2661 / JAL-1 / JCM 10045 / NBRC 100440) (Methanococcus jannaschii)).